We begin with the raw amino-acid sequence, 642 residues long: MPVITLPDGSQRQFDRAVSPMDVALDIGPGLAKATIAGRVNGELVDASDLIENDAQLSIITAKDAEGIEIIRHSCAHLLGHAIKQLWPNTKMAIGPVIDNGFYYDVDLDHTLTQEDIDALEKRMHELAETNYDVIKKNVSWHEARETFVKRGENYKVSILDENISHDDKPGLYHHEEYVDMCRGPHVPNMRFCHHFKLMKIAGAYWRGDSNNKMLQRIYGTAWADKKALNAYLVRLEEAAKRDHRKIGKQLDLYHMQEEAPGMVFWHNDGWTIFRELETFVRSKLKEYQYQEVKGPFMMDRVLWEKTGHWDNYKDAMFTTSSENREYCIKPMNCPGHVQIFNQGLKSYRDLPLRMAEFGSCHRNEPSGALHGLMRVRGFTQDDAHIFCTEGQVRDEVNACIRMVYDMYSTFGFEKIVVKLSTRPEKRIGSDETWDRAEADLAVALEENNIPFEYQLGEGAFYGPKIEFTLYDCLDRAWQCGTVQLDFSLPQRLSASYVGEDNERQIPVMIHRAILGSIERFIGILTEEFAGFFPTWLAPVQVVVMNITDSQADYVKELTQKLQNAGIRVKADLRNEKIGFKIREHTLRRVPYMLVCGDKEVESGKVAVRTRRGKDLGSLDVNEVIEKLRLEIRSRSLQQLEV.

Residues 1–61 (MPVITLPDGS…ENDAQLSIIT (61 aa)) form the TGS domain. A catalytic region spans residues 243–534 (DHRKIGKQLD…LTEEFAGFFP (292 aa)). Zn(2+) is bound by residues Cys-334, His-385, and His-511.

Belongs to the class-II aminoacyl-tRNA synthetase family. Homodimer. The cofactor is Zn(2+).

Its subcellular location is the cytoplasm. It carries out the reaction tRNA(Thr) + L-threonine + ATP = L-threonyl-tRNA(Thr) + AMP + diphosphate + H(+). Functionally, catalyzes the attachment of threonine to tRNA(Thr) in a two-step reaction: L-threonine is first activated by ATP to form Thr-AMP and then transferred to the acceptor end of tRNA(Thr). Also edits incorrectly charged L-seryl-tRNA(Thr). The chain is Threonine--tRNA ligase from Enterobacter sp. (strain 638).